The following is a 1236-amino-acid chain: DNA-directed RNA polymerase subunit beta (1236 aa).

Residues 1185-1236 (IEGSEDYTEPKQPNDNYLEEEENKDKESDYDEDLNFDDLTKGLQLDDFNDEH) form a disordered region. A compositionally biased stretch (acidic residues) spans 1201 to 1220 (YLEEEENKDKESDYDEDLNF).

Belongs to the RNA polymerase beta chain family. The RNAP catalytic core consists of 2 alpha, 1 beta, 1 beta' and 1 omega subunit. When a sigma factor is associated with the core the holoenzyme is formed, which can initiate transcription.

The catalysed reaction is RNA(n) + a ribonucleoside 5'-triphosphate = RNA(n+1) + diphosphate. DNA-dependent RNA polymerase catalyzes the transcription of DNA into RNA using the four ribonucleoside triphosphates as substrates. The sequence is that of DNA-directed RNA polymerase subunit beta from Clostridium tetani (strain Massachusetts / E88).